The following is a 279-amino-acid chain: MAACAGGPGSWSENILKYFLRNNQITAEDGAEILWSHAANHKSQMNEALKSAAHMIEADVLLPSDGSEHGQPIMAHPPETSSDNTLQEWLAEVVKSNKGIKLDFKSLAAVRASMLFLDNMKQHLQRPVWINADILPGPNGSSKVVDAKAFLDTVTSFFPDVTFSLGWTTGWHPEKVNEGYSWSMVKEMDYICSELTQPVTFPVRAALVRQSCPQLLWLLTKSNRYSLTVWTGKDDIYSTEDLLYIRDYFNKTQVFYDISEPQNHEFKQAIGIRGHSLRI.

This sequence belongs to the menorin family.

In terms of biological role, essential for survival of retinal photoreceptor cells. This chain is Protein FAM151B (Fam151b), found in Mus musculus (Mouse).